Consider the following 290-residue polypeptide: uncharacterized protein (290 aa).

The region spanning L2 to K238 is the ABC transporter domain. Residue G34 to S41 coordinates ATP.

Belongs to the ABC transporter superfamily.

This is an uncharacterized protein from Methanocaldococcus jannaschii (strain ATCC 43067 / DSM 2661 / JAL-1 / JCM 10045 / NBRC 100440) (Methanococcus jannaschii).